The sequence spans 262 residues: Phosphatidylglycerol--prolipoprotein diacylglyceryl transferase (262 aa).

Helical transmembrane passes span 17–37 (LKVH…WILA), 57–77 (LVFY…ALFY), and 92–112 (IWEG…AMYA). Arginine 140 provides a ligand contact to a 1,2-diacyl-sn-glycero-3-phospho-(1'-sn-glycerol). Transmembrane regions (helical) follow at residues 200-220 (MAVS…VEFV) and 234-254 (WLTM…VLLA).

It belongs to the Lgt family.

The protein localises to the cell inner membrane. The enzyme catalyses L-cysteinyl-[prolipoprotein] + a 1,2-diacyl-sn-glycero-3-phospho-(1'-sn-glycerol) = an S-1,2-diacyl-sn-glyceryl-L-cysteinyl-[prolipoprotein] + sn-glycerol 1-phosphate + H(+). It functions in the pathway protein modification; lipoprotein biosynthesis (diacylglyceryl transfer). Functionally, catalyzes the transfer of the diacylglyceryl group from phosphatidylglycerol to the sulfhydryl group of the N-terminal cysteine of a prolipoprotein, the first step in the formation of mature lipoproteins. This is Phosphatidylglycerol--prolipoprotein diacylglyceryl transferase from Methylococcus capsulatus (strain ATCC 33009 / NCIMB 11132 / Bath).